Consider the following 93-residue polypeptide: ATP synthase subunit c (93 aa).

2 helical membrane passes run 13 to 33 and 58 to 78; these read AIGVGIAIGVAACGGGIGMGI and ISLAMIEAQVIYALVIVFILL.

Belongs to the ATPase C chain family. In terms of assembly, F-type ATPases have 2 components, F(1) - the catalytic core - and F(0) - the membrane proton channel. F(1) has five subunits: alpha(3), beta(3), gamma(1), delta(1), epsilon(1). F(0) has three main subunits: a(1), b(2) and c(10-14). The alpha and beta chains form an alternating ring which encloses part of the gamma chain. F(1) is attached to F(0) by a central stalk formed by the gamma and epsilon chains, while a peripheral stalk is formed by the delta and b chains.

It localises to the cell inner membrane. Functionally, f(1)F(0) ATP synthase produces ATP from ADP in the presence of a proton or sodium gradient. F-type ATPases consist of two structural domains, F(1) containing the extramembraneous catalytic core and F(0) containing the membrane proton channel, linked together by a central stalk and a peripheral stalk. During catalysis, ATP synthesis in the catalytic domain of F(1) is coupled via a rotary mechanism of the central stalk subunits to proton translocation. In terms of biological role, key component of the F(0) channel; it plays a direct role in translocation across the membrane. A homomeric c-ring of between 10-14 subunits forms the central stalk rotor element with the F(1) delta and epsilon subunits. This Campylobacter hominis (strain ATCC BAA-381 / DSM 21671 / CCUG 45161 / LMG 19568 / NCTC 13146 / CH001A) protein is ATP synthase subunit c.